We begin with the raw amino-acid sequence, 327 residues long: Undecaprenyl-phosphate 4-deoxy-4-formamido-L-arabinose transferase (327 aa).

Residues methionine 1 to leucine 235 lie on the Cytoplasmic side of the membrane. The helical transmembrane segment at leucine 236–valine 256 threads the bilayer. At leucine 257–glycine 269 the chain is on the periplasmic side. A helical membrane pass occupies residues valine 270–leucine 290. The Cytoplasmic segment spans residues leucine 291–glutamine 327.

Belongs to the glycosyltransferase 2 family.

Its subcellular location is the cell inner membrane. It catalyses the reaction UDP-4-deoxy-4-formamido-beta-L-arabinose + di-trans,octa-cis-undecaprenyl phosphate = 4-deoxy-4-formamido-alpha-L-arabinopyranosyl di-trans,octa-cis-undecaprenyl phosphate + UDP. Its pathway is glycolipid biosynthesis; 4-amino-4-deoxy-alpha-L-arabinose undecaprenyl phosphate biosynthesis; 4-amino-4-deoxy-alpha-L-arabinose undecaprenyl phosphate from UDP-4-deoxy-4-formamido-beta-L-arabinose and undecaprenyl phosphate: step 1/2. It functions in the pathway bacterial outer membrane biogenesis; lipopolysaccharide biosynthesis. In terms of biological role, catalyzes the transfer of 4-deoxy-4-formamido-L-arabinose from UDP to undecaprenyl phosphate. The modified arabinose is attached to lipid A and is required for resistance to polymyxin and cationic antimicrobial peptides. This chain is Undecaprenyl-phosphate 4-deoxy-4-formamido-L-arabinose transferase, found in Salmonella dublin (strain CT_02021853).